Consider the following 230-residue polypeptide: MIEYIIGALGLIIASVQDFRSREIEDYIWIFLAVFGVLFAIYSSITLLDYSILINSISGFVICFILGYMMFLSGIGGGDGKMLIGLGALVPKFQMPIYTSLGTLLNLNYVPTFPIMVFINGIFFMVFLPFVILFRNILNGARPKTGKEFILMFFGEKMKVNVAKEQKRLIMGQNDKINFFPAADDEDFSKYSNNEEIWVTPQIPLIIPITLSYLVTPIIGDRILDFLIPF.

Residue Met1 is a topological domain, cytoplasmic. Residues 2-18 (IEYIIGALGLIIASVQD) traverse the membrane as a helical segment. Topologically, residues 19 to 23 (FRSRE) are extracellular. The chain crosses the membrane as a helical span at residues 24 to 46 (IEDYIWIFLAVFGVLFAIYSSIT). Over 47-49 (LLD) the chain is Cytoplasmic. Residues 50 to 72 (YSILINSISGFVICFILGYMMFL) traverse the membrane as a helical segment. Over 73 to 78 (SGIGGG) the chain is Extracellular. A helical transmembrane segment spans residues 79–89 (DGKMLIGLGAL). Topologically, residues 90–110 (VPKFQMPIYTSLGTLLNLNYV) are cytoplasmic. Residues 111–139 (PTFPIMVFINGIFFMVFLPFVILFRNILN) form a helical membrane-spanning segment. At 140 to 204 (GARPKTGKEF…EEIWVTPQIP (65 aa)) the chain is on the extracellular side. Residues 205–216 (LIIPITLSYLVT) form a helical membrane-spanning segment. The Cytoplasmic portion of the chain corresponds to 217–230 (PIIGDRILDFLIPF).

Belongs to the peptidase A24 family. Archaeal preflagellin peptidase subfamily.

It is found in the cell membrane. It carries out the reaction Cleaves the signal peptide of 3 to 12 amino acids from the N-terminal of preflagellin, usually at Arg-Gly-|- or Lys-Gly-|-, to release flagellin.. Functionally, cleaves the N-terminal leader peptide from preflagellins. This Methanococcus maripaludis (strain C6 / ATCC BAA-1332) protein is Preflagellin peptidase (flaK).